A 201-amino-acid polypeptide reads, in one-letter code: 3-isopropylmalate dehydratase small subunit (201 aa).

It belongs to the LeuD family. LeuD type 1 subfamily. Heterodimer of LeuC and LeuD.

It catalyses the reaction (2R,3S)-3-isopropylmalate = (2S)-2-isopropylmalate. The protein operates within amino-acid biosynthesis; L-leucine biosynthesis; L-leucine from 3-methyl-2-oxobutanoate: step 2/4. Its function is as follows. Catalyzes the isomerization between 2-isopropylmalate and 3-isopropylmalate, via the formation of 2-isopropylmaleate. The polypeptide is 3-isopropylmalate dehydratase small subunit (Chloroflexus aurantiacus (strain ATCC 29366 / DSM 635 / J-10-fl)).